Reading from the N-terminus, the 37-residue chain is Large ribosomal subunit protein bL36c (37 aa).

Belongs to the bacterial ribosomal protein bL36 family.

It localises to the plastid. The protein localises to the chloroplast. This is Large ribosomal subunit protein bL36c from Chloranthus spicatus (Chulantree).